A 68-amino-acid polypeptide reads, in one-letter code: Protein SlyX homolog (68 aa).

This sequence belongs to the SlyX family.

This is Protein SlyX homolog from Pseudomonas syringae pv. tomato (strain ATCC BAA-871 / DC3000).